A 256-amino-acid chain; its full sequence is Thiazole synthase (256 aa).

The active-site Schiff-base intermediate with DXP is Lys-95. Residues Gly-156, Ala-182–Gly-183, and Asn-204–Thr-205 each bind 1-deoxy-D-xylulose 5-phosphate.

It belongs to the ThiG family. As to quaternary structure, homotetramer. Forms heterodimers with either ThiH or ThiS.

The protein localises to the cytoplasm. The enzyme catalyses [ThiS sulfur-carrier protein]-C-terminal-Gly-aminoethanethioate + 2-iminoacetate + 1-deoxy-D-xylulose 5-phosphate = [ThiS sulfur-carrier protein]-C-terminal Gly-Gly + 2-[(2R,5Z)-2-carboxy-4-methylthiazol-5(2H)-ylidene]ethyl phosphate + 2 H2O + H(+). The protein operates within cofactor biosynthesis; thiamine diphosphate biosynthesis. Its function is as follows. Catalyzes the rearrangement of 1-deoxy-D-xylulose 5-phosphate (DXP) to produce the thiazole phosphate moiety of thiamine. Sulfur is provided by the thiocarboxylate moiety of the carrier protein ThiS. In vitro, sulfur can be provided by H(2)S. This Escherichia coli O127:H6 (strain E2348/69 / EPEC) protein is Thiazole synthase.